Reading from the N-terminus, the 258-residue chain is Phosphate import ATP-binding protein PstB (258 aa).

In terms of domain architecture, ABC transporter spans 13-253; the sequence is IKIENLNLWY…PREKSTEDYI (241 aa). 45–52 contributes to the ATP binding site; that stretch reads GPSGCGKS.

It belongs to the ABC transporter superfamily. Phosphate importer (TC 3.A.1.7) family. As to quaternary structure, the complex is composed of two ATP-binding proteins (PstB), two transmembrane proteins (PstC and PstA) and a solute-binding protein (PstS).

The protein resides in the cell membrane. The catalysed reaction is phosphate(out) + ATP + H2O = ADP + 2 phosphate(in) + H(+). Functionally, part of the ABC transporter complex PstSACB involved in phosphate import. Responsible for energy coupling to the transport system. In Methanosarcina barkeri (strain Fusaro / DSM 804), this protein is Phosphate import ATP-binding protein PstB.